Reading from the N-terminus, the 281-residue chain is Protein NipSnap homolog 2 (281 aa).

Residues 1 to 27 (MAARVLLARGGLLRPAAQSAFLPGLRT) constitute a mitochondrion transit peptide.

Belongs to the NipSnap family. In terms of assembly, interacts with CALCOCO2/NDP52, NBR1, SQSTM1/p62, TAX1BP1 and WDFY3/ALFY. Interacts with ATG8 family proteins (MAP1LC3A, MAP1LC3B, MAP1LC3C, GABARAP, GABARAPL1 and GABARAPL2). Interacts with VDAC1.

It is found in the mitochondrion matrix. It localises to the cytoplasm. In terms of biological role, protein involved in mitophagy by facilitating recruitment of the autophagy machinery required for clearance of damaged mitochondria. Accumulates on the mitochondria surface in response to mitochondrial depolarization and acts as a 'eat me' signal by recruiting proteins involved in selective autophagy, such as autophagy receptors (CALCOCO2/NDP52, NBR1, SQSTM1/p62, TAX1BP1 and WDFY3/ALFY) and ATG8 family proteins (MAP1LC3A, MAP1LC3B, MAP1LC3C, GABARAP, GABARAPL1 and GABARAPL2). May act as a positive regulator of L-type calcium channels. The sequence is that of Protein NipSnap homolog 2 from Mus musculus (Mouse).